We begin with the raw amino-acid sequence, 563 residues long: Delta-1-pyrroline-5-carboxylate dehydrogenase, mitochondrial (563 aa).

The transit peptide at 1–23 directs the protein to the mitochondrion; that stretch reads MLPPALLRRSLLSYAWRGSGLRW. Lys-30 is subject to N6-succinyllysine. Phosphoserine is present on Ser-43. At Lys-51 the chain carries N6-acetyllysine. Residues Lys-92, Lys-98, Lys-113, Lys-129, and Lys-174 each carry the N6-acetyllysine; alternate modification. An N6-succinyllysine; alternate mark is found at Lys-92, Lys-98, Lys-113, Lys-129, and Lys-174. Residues Ser-207, Lys-232, and 285-289 each bind NAD(+); that span reads GSVPT. The active-site Proton acceptor is Glu-313. Lys-317 carries the N6-acetyllysine modification. Lys-346 bears the N6-succinyllysine mark. Cys-347 functions as the Nucleophile in the catalytic mechanism. An N6-acetyllysine mark is found at Lys-364 and Lys-375. Lys-394 carries the post-translational modification N6-succinyllysine. Glu-446 contributes to the NAD(+) binding site. Lys-461 carries the post-translational modification N6-acetyllysine. N6-acetyllysine; alternate is present on Lys-508. Position 508 is an N6-succinyllysine; alternate (Lys-508). Substrate is bound at residue Ser-512.

It belongs to the aldehyde dehydrogenase family. As to quaternary structure, homodimer.

It localises to the mitochondrion matrix. It catalyses the reaction L-glutamate 5-semialdehyde + NAD(+) + H2O = L-glutamate + NADH + 2 H(+). It participates in amino-acid degradation; L-proline degradation into L-glutamate; L-glutamate from L-proline: step 2/2. Functionally, irreversible conversion of delta-1-pyrroline-5-carboxylate (P5C), derived either from proline or ornithine, to glutamate. This is a necessary step in the pathway interconnecting the urea and tricarboxylic acid cycles. The preferred substrate is glutamic gamma-semialdehyde, other substrates include succinic, glutaric and adipic semialdehydes. The polypeptide is Delta-1-pyrroline-5-carboxylate dehydrogenase, mitochondrial (Aldh4a1) (Rattus norvegicus (Rat)).